We begin with the raw amino-acid sequence, 245 residues long: Probable octanoyltransferase 2 (245 aa).

The 190-residue stretch at 38–227 (MEYKPVLYFQ…SIEKEFDIKE (190 aa)) folds into the BPL/LPL catalytic domain. Substrate-binding positions include 89–96 (RGGYETYH), 157–159 (SIG), and 170–172 (GMA). The Acyl-thioester intermediate role is filled by Cys188.

Belongs to the LipB family.

The protein localises to the cytoplasm. The enzyme catalyses octanoyl-[ACP] + L-lysyl-[protein] = N(6)-octanoyl-L-lysyl-[protein] + holo-[ACP] + H(+). It participates in protein modification; protein lipoylation via endogenous pathway; protein N(6)-(lipoyl)lysine from octanoyl-[acyl-carrier-protein]: step 1/2. Catalyzes the transfer of endogenously produced octanoic acid from octanoyl-acyl-carrier-protein onto the lipoyl domains of lipoate-dependent enzymes. Lipoyl-ACP can also act as a substrate although octanoyl-ACP is likely to be the physiological substrate. In Picrophilus torridus (strain ATCC 700027 / DSM 9790 / JCM 10055 / NBRC 100828 / KAW 2/3), this protein is Probable octanoyltransferase 2.